We begin with the raw amino-acid sequence, 795 residues long: Phenylalanine--tRNA ligase beta subunit (795 aa).

The tRNA-binding domain occupies A39–R148. Positions P401–N476 constitute a B5 domain. Mg(2+) is bound by residues D454, D460, E463, and E464. Residues S701–R794 form the FDX-ACB domain.

The protein belongs to the phenylalanyl-tRNA synthetase beta subunit family. Type 1 subfamily. Tetramer of two alpha and two beta subunits. Requires Mg(2+) as cofactor.

It localises to the cytoplasm. The enzyme catalyses tRNA(Phe) + L-phenylalanine + ATP = L-phenylalanyl-tRNA(Phe) + AMP + diphosphate + H(+). The chain is Phenylalanine--tRNA ligase beta subunit from Vibrio vulnificus (strain YJ016).